A 123-amino-acid chain; its full sequence is Small ribosomal subunit protein uS13 (123 aa).

The interval 97 to 123 (PVRGQRTKTNARTRKGPRKTVGVRRKK) is disordered.

The protein belongs to the universal ribosomal protein uS13 family. Part of the 30S ribosomal subunit. Forms a loose heterodimer with protein S19. Forms two bridges to the 50S subunit in the 70S ribosome.

Located at the top of the head of the 30S subunit, it contacts several helices of the 16S rRNA. In the 70S ribosome it contacts the 23S rRNA (bridge B1a) and protein L5 of the 50S subunit (bridge B1b), connecting the 2 subunits; these bridges are implicated in subunit movement. Contacts the tRNAs in the A and P-sites. This Pelotomaculum thermopropionicum (strain DSM 13744 / JCM 10971 / SI) protein is Small ribosomal subunit protein uS13.